Here is a 230-residue protein sequence, read N- to C-terminus: ATP synthase subunit a 1 (230 aa).

A run of 5 helical transmembrane segments spans residues 20-40 (ATIV…WLIT), 78-98 (FLPF…LTIF), 112-132 (AALA…NVGI), 174-194 (LLVA…MTLF), and 195-215 (GLLV…VYIA).

Belongs to the ATPase A chain family. As to quaternary structure, F-type ATPases have 2 components, CF(1) - the catalytic core - and CF(0) - the membrane proton channel. CF(1) has five subunits: alpha(3), beta(3), gamma(1), delta(1), epsilon(1). CF(0) has four main subunits: a, b, b' and c.

The protein resides in the cellular thylakoid membrane. In terms of biological role, key component of the proton channel; it plays a direct role in the translocation of protons across the membrane. The protein is ATP synthase subunit a 1 of Crocosphaera subtropica (strain ATCC 51142 / BH68) (Cyanothece sp. (strain ATCC 51142)).